The primary structure comprises 81 residues: Acyl carrier protein (81 aa).

Residues 4–79 (DEVYSRVRKI…DAVNYILSKK (76 aa)) enclose the Carrier domain. O-(pantetheine 4'-phosphoryl)serine is present on Ser39.

The protein belongs to the acyl carrier protein (ACP) family. 4'-phosphopantetheine is transferred from CoA to a specific serine of apo-ACP by AcpS. This modification is essential for activity because fatty acids are bound in thioester linkage to the sulfhydryl of the prosthetic group.

The protein localises to the cytoplasm. Its pathway is lipid metabolism; fatty acid biosynthesis. Its function is as follows. Carrier of the growing fatty acid chain in fatty acid biosynthesis. The sequence is that of Acyl carrier protein from Synechococcus sp. (strain JA-3-3Ab) (Cyanobacteria bacterium Yellowstone A-Prime).